The following is a 145-amino-acid chain: D-aminoacyl-tRNA deacylase (145 aa).

A Gly-cisPro motif, important for rejection of L-amino acids motif is present at residues 137-138; it reads GP.

The protein belongs to the DTD family. As to quaternary structure, homodimer.

It is found in the cytoplasm. It catalyses the reaction glycyl-tRNA(Ala) + H2O = tRNA(Ala) + glycine + H(+). The catalysed reaction is a D-aminoacyl-tRNA + H2O = a tRNA + a D-alpha-amino acid + H(+). In terms of biological role, an aminoacyl-tRNA editing enzyme that deacylates mischarged D-aminoacyl-tRNAs. Also deacylates mischarged glycyl-tRNA(Ala), protecting cells against glycine mischarging by AlaRS. Acts via tRNA-based rather than protein-based catalysis; rejects L-amino acids rather than detecting D-amino acids in the active site. By recycling D-aminoacyl-tRNA to D-amino acids and free tRNA molecules, this enzyme counteracts the toxicity associated with the formation of D-aminoacyl-tRNA entities in vivo and helps enforce protein L-homochirality. The polypeptide is D-aminoacyl-tRNA deacylase (Lactobacillus delbrueckii subsp. bulgaricus (strain ATCC 11842 / DSM 20081 / BCRC 10696 / JCM 1002 / NBRC 13953 / NCIMB 11778 / NCTC 12712 / WDCM 00102 / Lb 14)).